Reading from the N-terminus, the 500-residue chain is 4-aminobutyrate aminotransferase, mitochondrial (500 aa).

The transit peptide at 1–28 (MASMLLAQRLACSFQHSYRLLVPGSRHI) directs the protein to the mitochondrion. C163 serves as a coordination point for [2Fe-2S] cluster. 164–165 (GS) provides a ligand contact to pyridoxal 5'-phosphate. Residue C166 coordinates [2Fe-2S] cluster. Substrate is bound at residue R220. K231 is subject to N6-succinyllysine. An N6-acetyllysine; alternate modification is found at K252. K252 carries the N6-succinyllysine; alternate modification. N6-acetyllysine occurs at positions 279 and 318. N6-(pyridoxal phosphate)lysine is present on K357. T381 provides a ligand contact to pyridoxal 5'-phosphate. Position 413 is an N6-acetyllysine; alternate (K413). Position 413 is an N6-succinyllysine; alternate (K413). N6-acetyllysine is present on residues K452 and K470.

This sequence belongs to the class-III pyridoxal-phosphate-dependent aminotransferase family. As to quaternary structure, homodimer; disulfide-linked. Pyridoxal 5'-phosphate serves as cofactor. [2Fe-2S] cluster is required as a cofactor. In terms of tissue distribution, liver &gt; pancreas &gt; brain &gt; kidney &gt; heart &gt; placenta.

It localises to the mitochondrion matrix. The catalysed reaction is 4-aminobutanoate + 2-oxoglutarate = succinate semialdehyde + L-glutamate. It catalyses the reaction (S)-3-amino-2-methylpropanoate + 2-oxoglutarate = 2-methyl-3-oxopropanoate + L-glutamate. Its function is as follows. Catalyzes the conversion of gamma-aminobutyrate and L-beta-aminoisobutyrate to succinate semialdehyde and methylmalonate semialdehyde, respectively. Can also convert delta-aminovalerate and beta-alanine. The sequence is that of 4-aminobutyrate aminotransferase, mitochondrial from Homo sapiens (Human).